Reading from the N-terminus, the 410-residue chain is Chitin deacetylase 3 (410 aa).

The N-terminal stretch at 1-18 is a signal peptide; it reads MYGHLSLSTLSLLAVVAA. A propeptide spanning residues 19 to 39 is cleaved from the precursor; sequence APFHESWLQPRDSDVSQLFRR. N-linked (GlcNAc...) asparagine glycosylation is found at Asn-61 and Asn-80. A NodB homology domain is found at 124–314; sequence KVWALSFDDG…KAVANGWSVK (191 aa). The active-site Proton acceptor is the Asp-131. Residue Asp-131 participates in acetate binding. Asp-132 contributes to the Co(2+) binding site. Asn-149 carries N-linked (GlcNAc...) asparagine glycosylation. 2 residues coordinate Co(2+): His-183 and His-187. Tyr-225 provides a ligand contact to acetate. Asn-279 carries N-linked (GlcNAc...) asparagine glycosylation. His-289 serves as the catalytic Proton donor. Asn-293 is a glycosylation site (N-linked (GlcNAc...) asparagine). A lipid anchor (GPI-anchor amidated serine) is attached at Ser-385. The propeptide at 386–410 is removed in mature form; that stretch reads SSWPIANRPSLFVIACGLALAAIMV.

The protein belongs to the polysaccharide deacetylase family. It depends on Co(2+) as a cofactor.

It is found in the cell membrane. It catalyses the reaction [(1-&gt;4)-N-acetyl-beta-D-glucosaminyl](n) + n H2O = chitosan + n acetate. Functionally, hydrolyzes the N-acetamido groups of N-acetyl-D-glucosamine residues in chitin to form chitosan and acetate. Chitosan is required to anchor melanin to the cell wall, for maintenance of cell wall integrity, and for proper cytokinesis. Chitosan offers an advantage during infection as it is less readily detected than chitin by host immunosurveillance mechanisms. This is Chitin deacetylase 3 from Cryptococcus neoformans var. neoformans serotype D (strain B-3501A) (Filobasidiella neoformans).